Reading from the N-terminus, the 44-residue chain is U9-ctenitoxin-Co1a (44 aa).

4 disulfides stabilise this stretch: Cys-3–Cys-17, Cys-10–Cys-23, Cys-16–Cys-33, and Cys-25–Cys-31.

In terms of tissue distribution, expressed by the venom gland.

It is found in the secreted. Its function is as follows. Insecticidal neurotoxin that reversibly inhibits the N-methyl-D-aspartate (NMDA)-subtype of ionotropic glutamate receptor (GRIN) and inhibits inactivation of insect sodium channels (Nav). In vivo, is highly toxic to insects. This chain is U9-ctenitoxin-Co1a, found in Ctenus ornatus (Brazilian spider).